Here is a 348-residue protein sequence, read N- to C-terminus: Rhodopsin (348 aa).

The Extracellular portion of the chain corresponds to 1–33 (TEGPFFYIPMVNTSGVVRSPYEYPQYYLVNPAA). Asn-12 carries an N-linked (GlcNAc...) asparagine glycan. Residues 34-58 (YAILGAYMFFLIIIGFPVNFMTLYV) form a helical membrane-spanning segment. Topologically, residues 59 to 70 (TLEHKKLRTPLN) are cytoplasmic. Residues 71-93 (YILLNLAVADLFMVIGGFTTTMY) traverse the membrane as a helical segment. Residues 94–107 (SSMHGYFVLGRLGC) lie on the Extracellular side of the membrane. An intrachain disulfide couples Cys-107 to Cys-184. A helical membrane pass occupies residues 108–130 (NMEGFSATLGGMISLWSLAVLAI). The 'Ionic lock' involved in activated form stabilization motif lies at 131 to 133 (ERW). Topologically, residues 131 to 149 (ERWVVVCKPISNFRFGENH) are cytoplasmic. Residues 150–170 (AIMGVSLTWFMALACTVPPLV) traverse the membrane as a helical segment. The Extracellular segment spans residues 171-199 (GWSRYIPEGMQCSCGIDYYTRAEGFNNES). Asn-197 carries N-linked (GlcNAc...) asparagine glycosylation. A helical transmembrane segment spans residues 200–221 (FVLYMFFCHFLVPLVIIFFCYG). Residues 222–249 (RLLCAVKEAAAAQQESETTQRAEREVTR) lie on the Cytoplasmic side of the membrane. A helical membrane pass occupies residues 250 to 271 (MVIIMVIGFLVCWLPYASVAWF). Topologically, residues 272–283 (IFTHQGSEFGPL) are extracellular. The helical transmembrane segment at 284 to 305 (FMTIPAFFAKSSSIYNPMIYIC) threads the bilayer. Lys-293 carries the N6-(retinylidene)lysine modification. The Cytoplasmic portion of the chain corresponds to 306–348 (MNKQFRNCMITTLFCGKNPFEGEEEGASSTKTEASSASSVSPA). The S-palmitoyl cysteine moiety is linked to residue Cys-320. A disordered region spans residues 327-348 (GEEEGASSTKTEASSASSVSPA). Over residues 332–348 (ASSTKTEASSASSVSPA) the composition is skewed to low complexity.

Belongs to the G-protein coupled receptor 1 family. Opsin subfamily. Post-translationally, phosphorylated on some or all of the serine and threonine residues present in the C-terminal region. Contains one covalently linked retinal chromophore.

The protein localises to the membrane. Its subcellular location is the cell projection. It is found in the cilium. It localises to the photoreceptor outer segment. Photoreceptor required for image-forming vision at low light intensity. While most salt water fish species use retinal as chromophore, most freshwater fish use 3-dehydroretinal, or a mixture of retinal and 3-dehydroretinal. Light-induced isomerization of 11-cis to all-trans retinal triggers a conformational change that activates signaling via G-proteins. Subsequent receptor phosphorylation mediates displacement of the bound G-protein alpha subunit by arrestin and terminates signaling. In Sargocentron punctatissimum (Speckled squirrelfish), this protein is Rhodopsin (rho).